The following is a 421-amino-acid chain: 3-isopropylmalate dehydratase large subunit (421 aa).

Residues C300, C360, and C363 each contribute to the [4Fe-4S] cluster site.

This sequence belongs to the aconitase/IPM isomerase family. LeuC type 2 subfamily. In terms of assembly, heterodimer of LeuC and LeuD. [4Fe-4S] cluster serves as cofactor.

It carries out the reaction (2R,3S)-3-isopropylmalate = (2S)-2-isopropylmalate. Its pathway is amino-acid biosynthesis; L-leucine biosynthesis; L-leucine from 3-methyl-2-oxobutanoate: step 2/4. Its function is as follows. Catalyzes the isomerization between 2-isopropylmalate and 3-isopropylmalate, via the formation of 2-isopropylmaleate. In Moorella thermoacetica (strain ATCC 39073 / JCM 9320), this protein is 3-isopropylmalate dehydratase large subunit.